We begin with the raw amino-acid sequence, 883 residues long: Alanine--tRNA ligase (883 aa).

Residues histidine 563, histidine 567, cysteine 677, and histidine 681 each contribute to the Zn(2+) site.

Belongs to the class-II aminoacyl-tRNA synthetase family. It depends on Zn(2+) as a cofactor.

The protein localises to the cytoplasm. The catalysed reaction is tRNA(Ala) + L-alanine + ATP = L-alanyl-tRNA(Ala) + AMP + diphosphate. Its function is as follows. Catalyzes the attachment of alanine to tRNA(Ala) in a two-step reaction: alanine is first activated by ATP to form Ala-AMP and then transferred to the acceptor end of tRNA(Ala). Also edits incorrectly charged Ser-tRNA(Ala) and Gly-tRNA(Ala) via its editing domain. This Cereibacter sphaeroides (strain ATCC 17025 / ATH 2.4.3) (Rhodobacter sphaeroides) protein is Alanine--tRNA ligase.